The primary structure comprises 489 residues: Glycogen synthase (489 aa).

Arg-20 contributes to the ADP-alpha-D-glucose binding site.

This sequence belongs to the glycosyltransferase 1 family. Bacterial/plant glycogen synthase subfamily.

It carries out the reaction [(1-&gt;4)-alpha-D-glucosyl](n) + ADP-alpha-D-glucose = [(1-&gt;4)-alpha-D-glucosyl](n+1) + ADP + H(+). The protein operates within glycan biosynthesis; glycogen biosynthesis. Synthesizes alpha-1,4-glucan chains using ADP-glucose. This Pelodictyon phaeoclathratiforme (strain DSM 5477 / BU-1) protein is Glycogen synthase.